Reading from the N-terminus, the 1045-residue chain is Mitotic deacetylase-associated SANT domain protein (1045 aa).

Met1 is subject to N-acetylmethionine. 2 disordered regions span residues 1 to 68 (MNLQ…PPPS) and 99 to 159 (NSVM…PTYY). Residues 132 to 146 (STWNCHSLSLYSATK) show a composition bias toward polar residues. Lys166 is covalently cross-linked (Glycyl lysine isopeptide (Lys-Gly) (interchain with G-Cter in SUMO2)). Arg193 is modified (asymmetric dimethylarginine). Disordered stretches follow at residues 228 to 264 (QVFR…QQAA), 276 to 305 (SMPQ…AHHS), 330 to 349 (APQP…SRRL), 378 to 397 (HHWP…HPEA), and 410 to 441 (LPDG…STGD). Positions 240-264 (VAAFPPQKQQQQQQPQQQQQQQQAA) are enriched in low complexity. Residues 412-425 (DGERLAPNGREREA) show a composition bias toward basic and acidic residues. Arg447 bears the Omega-N-methylarginine mark. Ser461 is subject to Phosphoserine. Residues 543–563 (QAGGLDEDGKGPEQNPAEHKP) are disordered. The segment covering 549–563 (EDGKGPEQNPAEHKP) has biased composition (basic and acidic residues). A Glycyl lysine isopeptide (Lys-Gly) (interchain with G-Cter in SUMO1); alternate cross-link involves residue Lys590. Residue Lys590 forms a Glycyl lysine isopeptide (Lys-Gly) (interchain with G-Cter in SUMO2); alternate linkage. Thr655 is modified (phosphothreonine). Ser661 is subject to Phosphoserine. Thr704 bears the Phosphothreonine mark. Position 709 is a phosphoserine (Ser709). Phosphothreonine is present on Thr715. The region spanning 721–813 (PRINVGSRFQ…ETLNKLLLKK (93 aa)) is the ELM2 domain. Positions 828–879 (TGSDQWKMAERKLFNKGIAIYKKDFFLVQKLIQTKTVAQCVEFYYTYKKQVK) constitute an SANT domain. The tract at residues 887–1045 (TFGDVDTSDE…NTFPCKKCGR (159 aa)) is disordered. 2 stretches are compositionally biased toward basic and acidic residues: residues 894-909 (SDEK…DIKT) and 919-942 (PRRE…RKEG). Phosphoserine is present on Ser923. Over residues 943-957 (EEEVPEIQEKEEQEE) the composition is skewed to acidic residues. Polar residues predominate over residues 970–980 (ATQTLQANESA).

As to quaternary structure, interacts with DNTTIP1. Identified in a histone deacetylase complex that contains DNTTIP1, HDAC1 and MIDEAS; this complex assembles into a tetramer that contains four copies of each protein chain.

The protein localises to the nucleus. This is Mitotic deacetylase-associated SANT domain protein from Homo sapiens (Human).